A 160-amino-acid polypeptide reads, in one-letter code: Major strawberry allergen Fra a 1-2 (160 aa).

The protein belongs to the BetVI family. Monomer. Interacts with AP. In terms of tissue distribution, highly expressed in ripe red fruits. Expressed in roots and white fruits. Expressed at low levels in open flowers.

Involved in the control of flavonoid biosynthesis in fruits, probably by binding directly to natural flavonoids. Binds the natural flavonoid myricetin with affinities in the low micromolar range. The sequence is that of Major strawberry allergen Fra a 1-2 from Fragaria ananassa (Strawberry).